The primary structure comprises 238 residues: Probable transcriptional regulatory protein YeeN (238 aa).

Belongs to the TACO1 family. YeeN subfamily.

It is found in the cytoplasm. The chain is Probable transcriptional regulatory protein YeeN from Salmonella typhimurium (strain LT2 / SGSC1412 / ATCC 700720).